We begin with the raw amino-acid sequence, 31 residues long: Hyaluronidase (31 aa).

The protein belongs to the glycosyl hydrolase 56 family. In terms of processing, contains 2 disulfide bonds. N-glycosylated on at least two Asn residues by identical heptasaccharide units composed of Man, GlcNAc, and Fuc residues in the molar ration of 3:2:2. As to expression, expressed by the venom gland.

Its subcellular location is the secreted. It carries out the reaction Random hydrolysis of (1-&gt;4)-linkages between N-acetyl-beta-D-glucosamine and D-glucuronate residues in hyaluronate.. Functionally, hydrolyzes high molecular weight hyaluronic acid to produce small oligosaccharides. The protein is Hyaluronidase of Vespula maculifrons (Eastern yellow jacket).